Reading from the N-terminus, the 562-residue chain is F-box and WD repeat domain-containing 11-A (562 aa).

Residues 87 to 136 are homodimerization domain D; sequence GSFDKEKDLCIQLFDQWSESDQVEFVEHLIARMCHYQHGHINSYLKPMLQ. An F-box domain is found at 149–187; the sequence is DHIAENILSFLDARSLCSAELVCREWQRVISDGMLWKKL. 7 WD repeats span residues 256 to 295, 296 to 335, 336 to 375, 379 to 418, 419 to 458, 459 to 491, and 508 to 538; these read RSENSKGVYCLQYDDDKIISGLRDNSIKIWDKQSLECLKV, LTGHTGSVLCLQYDERVIVTGSSDSTVRVWDVSSGEVLNT, LIHHNEAVLHLRFCNGLMVTCSKDRSIAVWDMASATDISL, LVGHRAAVNVVDFDDKYIVSASGDRTIKVWSTSTCEFVRT, LNGHKRGIACLQYRDRLVVSGSSDNTIRLWDIECGACLRV, LEGHEELVRCIRFDNKRIVSGAYDGKIKVWDLQ, and LVEHSGRVFRLQFDEFQIISSSHDDTILIWD.

Self-associates. Component of the SCF(FBXW11) complex.

The protein resides in the cytoplasm. Its subcellular location is the nucleus. The protein operates within protein modification; protein ubiquitination. Functionally, substrate recognition component of a SCF (SKP1-CUL1-F-box protein) E3 ubiquitin-protein ligase complex which mediates the ubiquitination and subsequent proteasomal degradation of target proteins. Probably recognizes and binds to phosphorylated target proteins: the interaction with substrates requires the phosphorylation of the two serine residues in the substrates' destruction motif D-S-G-X(2,3,4)-S. SCF(FBXW11) mediates the ubiquitination of phosphorylated CTNNB1 and participates in Wnt signaling regulation. Participates in Wnt signaling regulation, and plays a role in eye and jaw development. SCF(FBXW11) plays a key role in NF-kappa-B activation by mediating ubiquitination of phosphorylated NFKBIA, leading to its degradation by the proteasome, thereby allowing the associated NF-kappa-B complex to translocate into the nucleus and to activate transcription. The polypeptide is F-box and WD repeat domain-containing 11-A (Danio rerio (Zebrafish)).